The following is a 312-amino-acid chain: Glycerol-3-phosphate dehydrogenase [NAD(P)+] (312 aa).

NADPH-binding residues include tryptophan 11, arginine 30, arginine 31, and lysine 95. Residues lysine 95, glycine 123, and serine 125 each contribute to the sn-glycerol 3-phosphate site. Alanine 127 contributes to the NADPH binding site. 5 residues coordinate sn-glycerol 3-phosphate: lysine 177, aspartate 230, serine 240, arginine 241, and asparagine 242. The active-site Proton acceptor is lysine 177. Arginine 241 is a binding site for NADPH. NADPH contacts are provided by valine 265 and glutamate 267.

The protein belongs to the NAD-dependent glycerol-3-phosphate dehydrogenase family.

It localises to the cytoplasm. It catalyses the reaction sn-glycerol 3-phosphate + NAD(+) = dihydroxyacetone phosphate + NADH + H(+). It carries out the reaction sn-glycerol 3-phosphate + NADP(+) = dihydroxyacetone phosphate + NADPH + H(+). It participates in membrane lipid metabolism; glycerophospholipid metabolism. Functionally, catalyzes the reduction of the glycolytic intermediate dihydroxyacetone phosphate (DHAP) to sn-glycerol 3-phosphate (G3P), the key precursor for phospholipid synthesis. This Helicobacter pylori (strain HPAG1) protein is Glycerol-3-phosphate dehydrogenase [NAD(P)+].